The following is a 497-amino-acid chain: Cytosol aminopeptidase (497 aa).

2 residues coordinate Mn(2+): lysine 267 and aspartate 272. Lysine 279 is an active-site residue. Positions 290, 349, and 351 each coordinate Mn(2+). Arginine 353 is an active-site residue.

It belongs to the peptidase M17 family. Mn(2+) serves as cofactor.

It is found in the cytoplasm. It carries out the reaction Release of an N-terminal amino acid, Xaa-|-Yaa-, in which Xaa is preferably Leu, but may be other amino acids including Pro although not Arg or Lys, and Yaa may be Pro. Amino acid amides and methyl esters are also readily hydrolyzed, but rates on arylamides are exceedingly low.. It catalyses the reaction Release of an N-terminal amino acid, preferentially leucine, but not glutamic or aspartic acids.. In terms of biological role, presumably involved in the processing and regular turnover of intracellular proteins. Catalyzes the removal of unsubstituted N-terminal amino acids from various peptides. The protein is Cytosol aminopeptidase (pepA) of Pseudomonas putida (Arthrobacter siderocapsulatus).